We begin with the raw amino-acid sequence, 429 residues long: Enolase 2 (429 aa).

Gln-163 serves as a coordination point for (2R)-2-phosphoglycerate. The active-site Proton donor is Glu-205. 3 residues coordinate Mg(2+): Asp-242, Glu-286, and Asp-313. 4 residues coordinate (2R)-2-phosphoglycerate: Lys-338, Arg-367, Ser-368, and Lys-389. The Proton acceptor role is filled by Lys-338.

The protein belongs to the enolase family. Mg(2+) serves as cofactor.

The protein localises to the cytoplasm. It is found in the secreted. Its subcellular location is the cell surface. It catalyses the reaction (2R)-2-phosphoglycerate = phosphoenolpyruvate + H2O. The protein operates within carbohydrate degradation; glycolysis; pyruvate from D-glyceraldehyde 3-phosphate: step 4/5. Its function is as follows. Catalyzes the reversible conversion of 2-phosphoglycerate (2-PG) into phosphoenolpyruvate (PEP). It is essential for the degradation of carbohydrates via glycolysis. The protein is Enolase 2 of Lactiplantibacillus plantarum (strain ATCC BAA-793 / NCIMB 8826 / WCFS1) (Lactobacillus plantarum).